Consider the following 316-residue polypeptide: Beta-ketoacyl-[acyl-carrier-protein] synthase III (316 aa).

Active-site residues include Cys112 and His243. Residues 244-248 (QANLR) are ACP-binding. Asn273 is an active-site residue.

Belongs to the thiolase-like superfamily. FabH family. In terms of assembly, homodimer.

Its subcellular location is the cytoplasm. The catalysed reaction is malonyl-[ACP] + acetyl-CoA + H(+) = 3-oxobutanoyl-[ACP] + CO2 + CoA. It functions in the pathway lipid metabolism; fatty acid biosynthesis. Its function is as follows. Catalyzes the condensation reaction of fatty acid synthesis by the addition to an acyl acceptor of two carbons from malonyl-ACP. Catalyzes the first condensation reaction which initiates fatty acid synthesis and may therefore play a role in governing the total rate of fatty acid production. Possesses both acetoacetyl-ACP synthase and acetyl transacylase activities. Its substrate specificity determines the biosynthesis of branched-chain and/or straight-chain of fatty acids. The sequence is that of Beta-ketoacyl-[acyl-carrier-protein] synthase III from Histophilus somni (strain 129Pt) (Haemophilus somnus).